A 164-amino-acid polypeptide reads, in one-letter code: Choriogonadotropin subunit beta (164 aa).

The signal sequence occupies residues Met-1–Ala-20. 6 disulfides stabilise this stretch: Cys-29–Cys-77, Cys-43–Cys-92, Cys-46–Cys-130, Cys-54–Cys-108, Cys-58–Cys-110, and Cys-113–Cys-120. Residue Asn-50 is glycosylated (N-linked (GlcNAc...) asparagine). The tract at residues His-133 to Gln-164 is disordered. The O-linked (GalNAc...) serine glycan is linked to Ser-140. Asn-146 carries an N-linked (GlcNAc...) asparagine glycan. Residue Ser-151 is glycosylated (O-linked (GalNAc...) serine).

It belongs to the glycoprotein hormones subunit beta family. As to quaternary structure, heterodimer of a common alpha chain and a unique beta chain which confers biological specificity to thyrotropin, lutropin, follitropin and gonadotropin.

The protein resides in the secreted. Its function is as follows. Stimulates the ovaries to synthesize the steroids that are essential for the maintenance of pregnancy. The polypeptide is Choriogonadotropin subunit beta (CGB) (Aotus nancymaae (Ma's night monkey)).